Here is a 430-residue protein sequence, read N- to C-terminus: MGKNVVVLGTQWGDEGKGKIVDLLTDQAAAVVRYQGGHNAGHTLVIDGEKTVLHLIPSGILRDNVECLIGNGVVVAPDALLREIAKLEEKGVPVRERLRISPSCTLILPYHVALDQAREAVRSEGKIGTTGRGIGPAYEDKVARRGLRIGDLFNPERFAKKLHELLEYHNFVLQNFYKVEPVDFQKTLDEALGYAESLKPMIADVAARLHELRKQGARIMFEGAQGSLLDIDHGTYPYVTSSSTTAGGTATGSGFGPLYLDYILGITKAYTTRVGSGPFPTELFDDIGAHLASKGHEFGSTTGRARRCGWFDAVILRRAIEINSISGLCLTKLDVLDGLKTVKLCVAYRNAEGVVIEAPTDADSYVGLEPVYEEMPGWSESTVGIKSLAELPANALAYIKRIEALVGAPIDIISTGPDRNETIVLRHPFA.

Residues 13 to 19 (GDEGKGK) and 41 to 43 (GHT) contribute to the GTP site. The Proton acceptor role is filled by Asp14. Positions 14 and 41 each coordinate Mg(2+). IMP contacts are provided by residues 14 to 17 (DEGK), 39 to 42 (NAGH), Thr130, Arg144, Gln225, Thr240, and Arg304. The active-site Proton donor is His42. Position 300-306 (300-306 (STTGRAR)) interacts with substrate. Residues Arg306, 332–334 (KLD), and 414–416 (STG) contribute to the GTP site.

The protein belongs to the adenylosuccinate synthetase family. In terms of assembly, homodimer. Mg(2+) is required as a cofactor.

The protein localises to the cytoplasm. The catalysed reaction is IMP + L-aspartate + GTP = N(6)-(1,2-dicarboxyethyl)-AMP + GDP + phosphate + 2 H(+). It functions in the pathway purine metabolism; AMP biosynthesis via de novo pathway; AMP from IMP: step 1/2. Functionally, plays an important role in the de novo pathway of purine nucleotide biosynthesis. Catalyzes the first committed step in the biosynthesis of AMP from IMP. The polypeptide is Adenylosuccinate synthetase (Azotobacter vinelandii (strain DJ / ATCC BAA-1303)).